The sequence spans 368 residues: tRNA-specific 2-thiouridylase MnmA (368 aa).

Residues 11 to 18 (GMSGGVDS) and methionine 37 each bind ATP. The interval 97–99 (NPD) is interaction with target base in tRNA. Cysteine 102 acts as the Nucleophile in catalysis. The cysteines at positions 102 and 199 are disulfide-linked. Glycine 127 provides a ligand contact to ATP. The segment at 149–151 (KDQ) is interaction with tRNA. Catalysis depends on cysteine 199, which acts as the Cysteine persulfide intermediate. The tract at residues 311-312 (RY) is interaction with tRNA.

The protein belongs to the MnmA/TRMU family. In terms of assembly, interacts with TusE.

The protein localises to the cytoplasm. The catalysed reaction is S-sulfanyl-L-cysteinyl-[protein] + uridine(34) in tRNA + AH2 + ATP = 2-thiouridine(34) in tRNA + L-cysteinyl-[protein] + A + AMP + diphosphate + H(+). Catalyzes the 2-thiolation of uridine at the wobble position (U34) of tRNA(Lys), tRNA(Glu) and tRNA(Gln), leading to the formation of s(2)U34, the first step of tRNA-mnm(5)s(2)U34 synthesis. Sulfur is provided by IscS, via a sulfur-relay system. Binds ATP and its substrate tRNAs. In Salmonella arizonae (strain ATCC BAA-731 / CDC346-86 / RSK2980), this protein is tRNA-specific 2-thiouridylase MnmA.